We begin with the raw amino-acid sequence, 281 residues long: 2,3,4,5-tetrahydropyridine-2,6-dicarboxylate N-succinyltransferase (281 aa).

The substrate site is built by Arg108 and Asp145.

The protein belongs to the transferase hexapeptide repeat family. Homotrimer.

The protein localises to the cytoplasm. It carries out the reaction (S)-2,3,4,5-tetrahydrodipicolinate + succinyl-CoA + H2O = (S)-2-succinylamino-6-oxoheptanedioate + CoA. Its pathway is amino-acid biosynthesis; L-lysine biosynthesis via DAP pathway; LL-2,6-diaminopimelate from (S)-tetrahydrodipicolinate (succinylase route): step 1/3. This Nitrobacter hamburgensis (strain DSM 10229 / NCIMB 13809 / X14) protein is 2,3,4,5-tetrahydropyridine-2,6-dicarboxylate N-succinyltransferase.